A 464-amino-acid polypeptide reads, in one-letter code: Isthmin-1 (464 aa).

Residues 1 to 29 form the signal peptide; it reads MVRLAAELLLLLGLLLLTLHITVLRGSGA. N39 carries an N-linked (GlcNAc...) asparagine glycan. 3 disordered regions span residues 50–98, 135–155, and 173–219; these read NVGS…LQRD, PDSE…SVPS, and SGDQ…STDG. The segment covering 51 to 63 has biased composition (polar residues); that stretch reads VGSDTTSETSFSL. 2 stretches are compositionally biased toward basic and acidic residues: residues 66–76 and 138–147; these read EAPREHLDHQA and EADKDQHPEN. The TSP type-1 domain maps to 218–262; that stretch reads DGEGDWSLWSVCSVTCGNGNQKRTRSCGYACTATESRTCDRPNCP. 3 disulfides stabilise this stretch: C229/C256, C233/C261, and C244/C248. Residues 289–452 form the AMOP domain; sequence LFEVDTDSCE…QKCTESPSDE (164 aa).

Belongs to the isthmin family. Interacts with integrin ITGAV/ITGB5.

It localises to the secreted. Its function is as follows. Acts as an angiogenesis inhibitor. The sequence is that of Isthmin-1 (ISM1) from Homo sapiens (Human).